Here is a 208-residue protein sequence, read N- to C-terminus: Cytidylate kinase (208 aa).

7–15 contacts ATP; sequence GPAASGKGT.

This sequence belongs to the cytidylate kinase family. Type 1 subfamily.

Its subcellular location is the cytoplasm. The catalysed reaction is CMP + ATP = CDP + ADP. It catalyses the reaction dCMP + ATP = dCDP + ADP. The chain is Cytidylate kinase from Xanthobacter autotrophicus (strain ATCC BAA-1158 / Py2).